The following is a 144-amino-acid chain: Large ribosomal subunit protein uL16 (144 aa).

Belongs to the universal ribosomal protein uL16 family. In terms of assembly, part of the 50S ribosomal subunit.

Binds 23S rRNA and is also seen to make contacts with the A and possibly P site tRNAs. This Clostridium botulinum (strain Alaska E43 / Type E3) protein is Large ribosomal subunit protein uL16.